The sequence spans 603 residues: Iron-sulfur clusters transporter ATM1, mitochondrial (603 aa).

The chain crosses the membrane as a helical span at residues 20-41 (VLLAVGLLVGGKVLNVQVPFFF). Positions 20–310 (VLLAVGLLVG…LGSVYRELRQ (291 aa)) constitute an ABC transmembrane type-1 domain. Over 42–64 (REIVDSLNVDIAATGGTVATVAG) the chain is Mitochondrial intermembrane. The helical transmembrane segment at 65–88 (TMIFAYGASRIGAVVSQELRNAVF) threads the bilayer. The Mitochondrial matrix segment spans residues 89–137 (SSVAQKAIRRVATRTFGHLLNLDLNFHLSKQTGGLTRAIDRGTKGISFL). Residues 138 to 161 (LTSMVFHIVPTALEISMVCGILTY) form a helical membrane-spanning segment. Residue Gln162 is a topological domain, mitochondrial intermembrane. Residues 163–183 (FGWEFAAVTALTMSAYTAFTI) traverse the membrane as a helical segment. Over 184–249 (WTTAWRTKFR…SSIKVATSLA (66 aa)) the chain is Mitochondrial matrix. Glutathione contacts are provided by residues 189–193 (RTKFR) and 252–255 (NSGQ). The helical transmembrane segment at 250-268 (FLNSGQNIIFSSALTIMMW) threads the bilayer. Residues 269–283 (LGAKGIVAGSLSVGD) lie on the Mitochondrial intermembrane side of the membrane. The chain crosses the membrane as a helical span at residues 284-305 (LVLINQLVFQLSVPLNFLGSVY). Gly302 is a binding site for glutathione. The Mitochondrial matrix portion of the chain corresponds to 306-603 (RELRQSLLDM…SEREAPVPVK (298 aa)). The 237-residue stretch at 345–581 (IRFDNVSFGY…NGLYTELWMA (237 aa)) folds into the ABC transporter domain. ATP is bound by residues Tyr354 and 378-389 (GPSGCGKSTLLR).

This sequence belongs to the ABC transporter superfamily. ABCB family. Heavy Metal importer (TC 3.A.1.210) subfamily. As to quaternary structure, homodimer.

It is found in the mitochondrion inner membrane. In terms of biological role, performs an essential function in the generation of cytoplasmic iron-sulfur proteins by mediating the ATP-dependent export of Fe/S cluster precursors synthesized by NFS1 and other mitochondrial proteins. Hydrolyzes ATP. Binds glutathione and may function by transporting a glutathione-conjugated iron-sulfur compound. The sequence is that of Iron-sulfur clusters transporter ATM1, mitochondrial from Chaetomium globosum (strain ATCC 6205 / CBS 148.51 / DSM 1962 / NBRC 6347 / NRRL 1970) (Soil fungus).